The primary structure comprises 216 residues: Somatotropin (216 aa).

An N-terminal signal peptide occupies residues 1-26 (MAAGPRTSALLAFALLCLPWTREVGA). His-45 contacts Zn(2+). The cysteines at positions 78 and 189 are disulfide-linked. Residue Ser-131 is modified to Phosphoserine. Glu-198 is a binding site for Zn(2+). Cys-206 and Cys-214 form a disulfide bridge.

This sequence belongs to the somatotropin/prolactin family.

Its subcellular location is the secreted. Functionally, plays an important role in growth control. Its major role in stimulating body growth is to stimulate the liver and other tissues to secrete IGF1. It stimulates both the differentiation and proliferation of myoblasts. It also stimulates amino acid uptake and protein synthesis in muscle and other tissues. The sequence is that of Somatotropin (GH1) from Sus scrofa (Pig).